The following is a 98-amino-acid chain: uncharacterized protein (98 aa).

A disordered region spans residues 77-98; sequence SERAGEEVPPLAVAGSDDGHDH.

To M.tuberculosis Rv1991c and Rv3269.

This is an uncharacterized protein from Mycobacterium bovis (strain ATCC BAA-935 / AF2122/97).